Consider the following 410-residue polypeptide: Scarecrow-like protein 32 (410 aa).

Residues 18–408 (LRGCGDANFM…HSVVFATVWV (391 aa)) enclose the GRAS domain. Residues 25–88 (NFMEQLLLHC…AVSKTPTLSS (64 aa)) are leucine repeat I (LRI). The VHIID stretch occupies residues 107–188 (LAAFVDLTPW…HFPPFINISY (82 aa)). A VHIID motif is present at residues 138–142 (VHIVD). The tract at residues 190 to 227 (ELGSKLVNFATTRNITMEFTIVPSTYSDGFSSLLQQLR) is leucine repeat II (LRII). Positions 237 to 329 (LVVNCHMMLR…EAEISWKIEN (93 aa)) are PFYRE. The segment at 332–408 (AKEGAERVER…HSVVFATVWV (77 aa)) is SAW.

This sequence belongs to the GRAS family. In terms of tissue distribution, expressed in seedlings, leaves and flowers.

The protein resides in the nucleus. Its function is as follows. Probable transcription factor involved in plant development. This is Scarecrow-like protein 32 (SCL32) from Arabidopsis thaliana (Mouse-ear cress).